The sequence spans 584 residues: Protein DENND6A (584 aa).

The tract at residues 1-23 (MALWERGAGGAAEAGEDATEEPE) is disordered. A uDENN domain is found at 39-218 (HCVCVVGFDL…KLRIPTYRDK (180 aa)). The 126-residue stretch at 244–369 (EVDLFRCFCP…VKVKKLKNLK (126 aa)) folds into the cDENN domain. In terms of domain architecture, dDENN spans 371–504 (LDSKPGVYTS…RSRQKEMTQN (134 aa)).

The protein belongs to the DENND6 family.

The protein localises to the recycling endosome. It localises to the cytoplasm. In terms of biological role, guanine nucleotide exchange factor (GEF) for RAB14. This is Protein DENND6A (DENND6A) from Gallus gallus (Chicken).